We begin with the raw amino-acid sequence, 92 residues long: Small ribosomal subunit protein uS19 (92 aa).

This sequence belongs to the universal ribosomal protein uS19 family.

Its function is as follows. Protein S19 forms a complex with S13 that binds strongly to the 16S ribosomal RNA. The sequence is that of Small ribosomal subunit protein uS19 from Rhizobium etli (strain CIAT 652).